The following is a 614-amino-acid chain: DBH-like monooxygenase protein 1 homolog (614 aa).

Residues 1-22 (MSENKLFCAIVFLTSLFCSTCS) form the signal peptide. Over 23–593 (QGTRFVHSAA…CRKDSAIQCE (571 aa)) the chain is Lumenal. The 114-residue stretch at 37–150 (RRYNIKWGFD…STVRVIWAFH (114 aa)) folds into the DOMON domain. N-linked (GlcNAc...) asparagine glycosylation occurs at Asn116. Residue Tyr205 is part of the active site. 2 cysteine pairs are disulfide-bonded: Cys207–Cys259 and Cys244–Cys271. Residues His237 and His238 each contribute to the Cu cation site. An N-linked (GlcNAc...) asparagine glycan is attached at Asn249. Residues His309, His391, and His393 each coordinate Cu cation. Intrachain disulfides connect Cys366–Cys482, Cys370–Cys552, and Cys445–Cys467. Residue His391 is part of the active site. Residue Asn454 is glycosylated (N-linked (GlcNAc...) asparagine). Met466 provides a ligand contact to Cu cation. A glycan (N-linked (GlcNAc...) asparagine) is linked at Asn519. A helical membrane pass occupies residues 594 to 612 (HSLALLLTACLLLILQTCL).

The protein belongs to the copper type II ascorbate-dependent monooxygenase family. The cofactor is Cu(2+).

It is found in the endoplasmic reticulum membrane. This chain is DBH-like monooxygenase protein 1 homolog (moxd1), found in Danio rerio (Zebrafish).